The following is a 249-amino-acid chain: LexA repressor (249 aa).

Positions 1–25 are disordered; it reads MAAAATGGRATSQPKKTTKGLTPRQ. Positions 45–65 form a DNA-binding region, H-T-H motif; sequence MREIGDTVGLASLSSVTHQLS. Active-site for autocatalytic cleavage activity residues include serine 173 and lysine 210.

The protein belongs to the peptidase S24 family. As to quaternary structure, homodimer.

The catalysed reaction is Hydrolysis of Ala-|-Gly bond in repressor LexA.. In terms of biological role, represses a number of genes involved in the response to DNA damage (SOS response), including recA and lexA. In the presence of single-stranded DNA, RecA interacts with LexA causing an autocatalytic cleavage which disrupts the DNA-binding part of LexA, leading to derepression of the SOS regulon and eventually DNA repair. The protein is LexA repressor of Pseudarthrobacter chlorophenolicus (strain ATCC 700700 / DSM 12829 / CIP 107037 / JCM 12360 / KCTC 9906 / NCIMB 13794 / A6) (Arthrobacter chlorophenolicus).